The chain runs to 344 residues: Glutamine synthetase (344 aa).

A GS beta-grasp domain is found at 4-86 (YKLEYIWLDG…VMCEVMMPDG (83 aa)). Residues 89–344 (PHASNKRATI…SVPTEKKAVA (256 aa)) form the GS catalytic domain. Mg(2+) is bound by residues E109 and E111. An ATP-binding site is contributed by E167. The Mg(2+) site is built by E172 and E179. Residue E278 coordinates L-glutamate.

The protein belongs to the glutamine synthetase family. In terms of assembly, homooctamer and homotetramer. The cofactor is Mg(2+).

Its subcellular location is the cytoplasm. It carries out the reaction L-glutamate + NH4(+) + ATP = L-glutamine + ADP + phosphate + H(+). Catalyzes the ATP-dependent biosynthesis of glutamine from glutamate and ammonia. The polypeptide is Glutamine synthetase (Bradyrhizobium diazoefficiens (strain JCM 10833 / BCRC 13528 / IAM 13628 / NBRC 14792 / USDA 110)).